A 202-amino-acid polypeptide reads, in one-letter code: PITH domain-containing protein 1 (202 aa).

A PITH domain is found at 11–184; sequence SHGVDDGIEY…IVNTVYESKP (174 aa).

The protein belongs to the PITHD1 family.

The protein is PITH domain-containing protein 1 of Dictyostelium discoideum (Social amoeba).